We begin with the raw amino-acid sequence, 198 residues long: tRNA (pseudouridine(54)-N(1))-methyltransferase (198 aa).

Leu-128 is an S-adenosyl-L-methionine binding site.

It belongs to the methyltransferase superfamily. TrmY family. Homodimer.

The protein localises to the cytoplasm. It catalyses the reaction pseudouridine(54) in tRNA + S-adenosyl-L-methionine = N(1)-methylpseudouridine(54) in tRNA + S-adenosyl-L-homocysteine + H(+). Specifically catalyzes the N1-methylation of pseudouridine at position 54 (Psi54) in tRNAs. This is tRNA (pseudouridine(54)-N(1))-methyltransferase from Natronomonas pharaonis (strain ATCC 35678 / DSM 2160 / CIP 103997 / JCM 8858 / NBRC 14720 / NCIMB 2260 / Gabara) (Halobacterium pharaonis).